We begin with the raw amino-acid sequence, 25 residues long: Cruzioseptin-13 (25 aa).

Residue asparagine 25 is modified to Asparagine amide.

In terms of tissue distribution, expressed by the skin glands.

Its subcellular location is the secreted. Functionally, has antimicrobial activity. This chain is Cruzioseptin-13, found in Cruziohyla calcarifer (Splendid leaf frog).